Here is a 431-residue protein sequence, read N- to C-terminus: Enolase (431 aa).

Gln-167 is a binding site for (2R)-2-phosphoglycerate. Residue Glu-209 is the Proton donor of the active site. Asp-246, Glu-290, and Asp-317 together coordinate Mg(2+). Lys-342, Arg-371, Ser-372, and Lys-393 together coordinate (2R)-2-phosphoglycerate. Lys-342 (proton acceptor) is an active-site residue.

The protein belongs to the enolase family. In terms of assembly, component of the RNA degradosome, a multiprotein complex involved in RNA processing and mRNA degradation. Requires Mg(2+) as cofactor.

It localises to the cytoplasm. It is found in the secreted. The protein localises to the cell surface. The catalysed reaction is (2R)-2-phosphoglycerate = phosphoenolpyruvate + H2O. It functions in the pathway carbohydrate degradation; glycolysis; pyruvate from D-glyceraldehyde 3-phosphate: step 4/5. In terms of biological role, catalyzes the reversible conversion of 2-phosphoglycerate (2-PG) into phosphoenolpyruvate (PEP). It is essential for the degradation of carbohydrates via glycolysis. The chain is Enolase from Enterobacter sp. (strain 638).